A 622-amino-acid polypeptide reads, in one-letter code: Matrilin-4 (622 aa).

The first 18 residues, 1-18, serve as a signal peptide directing secretion; it reads MRGLLCWPVLLLLLQPWE. A VWFA 1 domain is found at 34–213; sequence DLVFVIDSSR…EFGLQFQSRL (180 aa). Asparagine 69 is a glycosylation site (N-linked (GlcNAc...) asparagine). The EGF-like 1; incomplete domain occupies 215 to 255; that stretch reads GKDQCAEGGHGCQHQCVNAWAMFHCTCNPGYKLAADNKSCL. 12 disulfides stabilise this stretch: cysteine 219/cysteine 230, cysteine 226/cysteine 239, cysteine 241/cysteine 254, cysteine 260/cysteine 271, cysteine 267/cysteine 280, cysteine 282/cysteine 295, cysteine 301/cysteine 312, cysteine 308/cysteine 321, cysteine 323/cysteine 336, cysteine 342/cysteine 353, cysteine 349/cysteine 362, and cysteine 364/cysteine 377. Asparagine 251 carries an N-linked (GlcNAc...) asparagine glycan. EGF-like domains lie at 256-292, 297-337, and 342-377; these read AIDL…QQDQ, AIDY…RSCQ, and CNGV…GKSC. A glycan (N-linked (GlcNAc...) asparagine) is linked at asparagine 305. A VWFA 2 domain is found at 386–561; that stretch reads DLVLLVDGSK…GTMTHLLENL (176 aa). Residues 591–622 adopt a coiled-coil conformation; that stretch reads GRTLGALESLTLNLAQLTARLEDLENQLANQK.

As to quaternary structure, interacts with COMP. In terms of tissue distribution, embryonic kidney, lung and placenta.

The protein resides in the secreted. Its function is as follows. Major component of the extracellular matrix of cartilage. The protein is Matrilin-4 (MATN4) of Homo sapiens (Human).